A 349-amino-acid polypeptide reads, in one-letter code: D-alanine--D-alanine ligase (349 aa).

Positions 132–335 (KHVFEAVGVP…YSDLIEKLVD (204 aa)) constitute an ATP-grasp domain. 162 to 217 (VEKLEFPVFVKPANMGSSVGISKVDDLADLQPALSEAYKYDNRVVIEQGVDAREIE) provides a ligand contact to ATP. Mg(2+) contacts are provided by Asp-289, Glu-302, and Asn-304.

This sequence belongs to the D-alanine--D-alanine ligase family. It depends on Mg(2+) as a cofactor. The cofactor is Mn(2+).

The protein localises to the cytoplasm. The catalysed reaction is 2 D-alanine + ATP = D-alanyl-D-alanine + ADP + phosphate + H(+). The protein operates within cell wall biogenesis; peptidoglycan biosynthesis. In terms of biological role, cell wall formation. This is D-alanine--D-alanine ligase from Lactococcus lactis subsp. lactis (strain IL1403) (Streptococcus lactis).